The following is a 361-amino-acid chain: S-adenosylmethionine decarboxylase proenzyme (361 aa).

Residues Glu13 and Glu16 contribute to the active site. The Schiff-base intermediate with substrate; via pyruvic acid role is filled by Ser73. Ser73 is subject to Pyruvic acid (Ser); by autocatalysis. Cys87 serves as the catalytic Proton donor; for catalytic activity. Residues Ser236 and His249 each act as proton acceptor; for processing activity in the active site.

Belongs to the eukaryotic AdoMetDC family. The cofactor is pyruvate. Is synthesized initially as an inactive proenzyme. Formation of the active enzyme involves a self-maturation process in which the active site pyruvoyl group is generated from an internal serine residue via an autocatalytic post-translational modification. Two non-identical subunits are generated from the proenzyme in this reaction, and the pyruvate is formed at the N-terminus of the alpha chain, which is derived from the carboxyl end of the proenzyme. The post-translation cleavage follows an unusual pathway, termed non-hydrolytic serinolysis, in which the side chain hydroxyl group of the serine supplies its oxygen atom to form the C-terminus of the beta chain, while the remainder of the serine residue undergoes an oxidative deamination to produce ammonia and the pyruvoyl group blocking the N-terminus of the alpha chain.

It carries out the reaction S-adenosyl-L-methionine + H(+) = S-adenosyl 3-(methylsulfanyl)propylamine + CO2. The protein operates within amine and polyamine biosynthesis; S-adenosylmethioninamine biosynthesis; S-adenosylmethioninamine from S-adenosyl-L-methionine: step 1/1. The polypeptide is S-adenosylmethionine decarboxylase proenzyme (SAMDC) (Nicotiana tabacum (Common tobacco)).